A 261-amino-acid polypeptide reads, in one-letter code: Glucose 1-dehydrogenase 3 (261 aa).

Residue 11–35 participates in NAD(+) binding; the sequence is VITGGSTGLGRAMAVRFGQEEAKVV. Substrate is bound at residue S145. The active-site Proton acceptor is the Y158.

Belongs to the short-chain dehydrogenases/reductases (SDR) family. Homotetramer.

The catalysed reaction is D-glucose + NAD(+) = D-glucono-1,5-lactone + NADH + H(+). The enzyme catalyses D-glucose + NADP(+) = D-glucono-1,5-lactone + NADPH + H(+). This is Glucose 1-dehydrogenase 3 (gdhIII) from Priestia megaterium (Bacillus megaterium).